The chain runs to 96 residues: Protein Vpr (96 aa).

The homooligomerization stretch occupies residues 1 to 42 (MEQAPEDQGPQREPYNEWTLELLEELKNEAVRHFPRIWLHSL). Residues Ser-79, Ser-94, and Ser-96 each carry the phosphoserine; by host modification.

Belongs to the HIV-1 VPR protein family. Homooligomer, may form homodimer. Interacts with p6-gag region of the Pr55 Gag precursor protein through a (Leu-X-X)4 motif near the C-terminus of the P6gag protein. Interacts with host UNG. May interact with host RAD23A/HHR23A. Interacts with host VPRBP/DCAF1, leading to hijack the CUL4A-RBX1-DDB1-DCAF1/VPRBP complex, mediating ubiquitination of host proteins such as TERT and ZGPAT and arrest of the cell cycle in G2 phase. Post-translationally, phosphorylated on several residues by host. These phosphorylations regulate VPR activity for the nuclear import of the HIV-1 pre-integration complex.

It is found in the virion. The protein resides in the host nucleus. It localises to the host extracellular space. In terms of biological role, during virus replication, may deplete host UNG protein, and incude G2-M cell cycle arrest. Acts by targeting specific host proteins for degradation by the 26S proteasome, through association with the cellular CUL4A-DDB1 E3 ligase complex by direct interaction with host VPRPB/DCAF-1. Cell cycle arrest reportedly occurs within hours of infection and is not blocked by antiviral agents, suggesting that it is initiated by the VPR carried into the virion. Additionally, VPR induces apoptosis in a cell cycle dependent manner suggesting that these two effects are mechanistically linked. Detected in the serum and cerebrospinal fluid of AIDS patient, VPR may also induce cell death to bystander cells. During virus entry, plays a role in the transport of the viral pre-integration (PIC) complex to the host nucleus. This function is crucial for viral infection of non-dividing macrophages. May act directly at the nuclear pore complex, by binding nucleoporins phenylalanine-glycine (FG)-repeat regions. This Homo sapiens (Human) protein is Protein Vpr.